The following is a 548-amino-acid chain: Non-structural protein NS1 (548 aa).

The protein belongs to the orbivirus non-structural protein NS1 family.

The sequence is that of Non-structural protein NS1 (Segment-5) from Camelus dromedarius (Dromedary).